We begin with the raw amino-acid sequence, 258 residues long: MNTQTTPSPQFYLTAPAACPYLPHEMERKVFTHLVGPRAAEMNDILTQGGFRRSQNIAYRPACESCRACVSVRILAQEFEPTKSMKRVLAANSDVIATEFAAQPSSEQYSLFRRYLDFRHQQGGMSDMTVLDYAIMVEDTHVNTRIIEYRRREEGSGLEQRPKGELLAAALTDTMSDGLSMVYSYFNPALEQRSLGTFMILDHVRRTKALGLPHVYLGYWVQGSRKMDYKTRFQPQEHLTPRGWERFDPSSMPESTHD.

The protein belongs to the R-transferase family. Bpt subfamily.

It localises to the cytoplasm. The enzyme catalyses N-terminal L-glutamyl-[protein] + L-leucyl-tRNA(Leu) = N-terminal L-leucyl-L-glutamyl-[protein] + tRNA(Leu) + H(+). It catalyses the reaction N-terminal L-aspartyl-[protein] + L-leucyl-tRNA(Leu) = N-terminal L-leucyl-L-aspartyl-[protein] + tRNA(Leu) + H(+). In terms of biological role, functions in the N-end rule pathway of protein degradation where it conjugates Leu from its aminoacyl-tRNA to the N-termini of proteins containing an N-terminal aspartate or glutamate. The chain is Aspartate/glutamate leucyltransferase from Rhizobium johnstonii (strain DSM 114642 / LMG 32736 / 3841) (Rhizobium leguminosarum bv. viciae).